We begin with the raw amino-acid sequence, 218 residues long: Ras-related protein Rab-42 (218 aa).

Positions 19, 21, 22, 23, and 46 each coordinate GTP. Residues threonine 23, threonine 46, and aspartate 70 each contribute to the Mg(2+) site. GTP is bound by residues glycine 73, lysine 130, aspartate 132, valine 160, and lysine 161. S-geranylgeranyl cysteine attachment occurs at residues cysteine 216 and cysteine 218.

Belongs to the small GTPase superfamily. Rab family. Requires Mg(2+) as cofactor.

The protein resides in the membrane. The enzyme catalyses GTP + H2O = GDP + phosphate + H(+). Regulated by guanine nucleotide exchange factors (GEFs) which promote the exchange of bound GDP for free GTP. Regulated by GTPase activating proteins (GAPs) which increase the GTP hydrolysis activity. Inhibited by GDP dissociation inhibitors (GDIs). The small GTPases Rab are key regulators of intracellular membrane trafficking, from the formation of transport vesicles to their fusion with membranes. Rabs cycle between an inactive GDP-bound form and an active GTP-bound form that is able to recruit to membranes different sets of downstream effectors directly responsible for vesicle formation, movement, tethering and fusion. The physiological function of RAB42 remains undefined. The protein is Ras-related protein Rab-42 of Homo sapiens (Human).